The sequence spans 343 residues: Flavonoid 4'-O-methyltransferase 4 (343 aa).

Asp211 contacts S-adenosyl-L-methionine. His249 functions as the Proton acceptor in the catalytic mechanism.

The protein belongs to the class I-like SAM-binding methyltransferase superfamily. Cation-independent O-methyltransferase family. In terms of assembly, homodimer.

It catalyses the reaction apigenin + S-adenosyl-L-methionine = acacetin + S-adenosyl-L-homocysteine + H(+). The catalysed reaction is kaempferol + S-adenosyl-L-methionine = kaempferide + S-adenosyl-L-homocysteine + H(+). The enzyme catalyses isorhamnetin + S-adenosyl-L-methionine = 3',4'-O-dimethylquercetin + S-adenosyl-L-homocysteine + 2 H(+). It carries out the reaction scutellarein + S-adenosyl-L-methionine = scutellarein 4'-methyl ether + S-adenosyl-L-homocysteine + H(+). It catalyses the reaction (2S)-naringenin + S-adenosyl-L-methionine = (2S)-naringenin 4'-methyl ether + S-adenosyl-L-homocysteine + H(+). The catalysed reaction is 4',7,8-trihydroxyflavone + S-adenosyl-L-methionine = 7,8-dihydroxy-4'-methoxyflavone + S-adenosyl-L-homocysteine + H(+). The enzyme catalyses taxifolin + S-adenosyl-L-methionine = taxifolin 4'-methyl ether + S-adenosyl-L-homocysteine + H(+). The protein operates within flavonoid metabolism. Flavonoid 4'-O-methyltransferase involved in the biosynthesis of polymethoxylated flavonoids natural products such as pebrellin, aroma compounds which contribute to the flavor of peppermint, and exhibit pharmacological activities such as anti-allergic, anti-oxidant, antibacterial, anti-proliferative, and anti-inflammatory effects. Catalyzes S-adenosylmethionine-dependent regioselective 4'-O-methylation of flavonoids; active on various hydroxylated flavonoid substrates, including isorhamnetin, kaempferol, apigenin (API), scutellarein (6-hydroxy-apigenin, 6-OH-API, SCU), taxifolin, 7,8,4'-trihydroxy-flavone and naringenin (NAR), and, with a lower efficiency, quercetin, rhamnetin, luteolin (LUT) and 7,8,3',4'-tetrahydroxy-flavone. The chain is Flavonoid 4'-O-methyltransferase 4 from Mentha piperita (Peppermint).